The following is a 250-amino-acid chain: Methylthioribulose-1-phosphate dehydratase (250 aa).

Residues H103 and H105 each coordinate Zn(2+).

This sequence belongs to the aldolase class II family. MtnB subfamily. Zn(2+) is required as a cofactor.

It catalyses the reaction 5-(methylsulfanyl)-D-ribulose 1-phosphate = 5-methylsulfanyl-2,3-dioxopentyl phosphate + H2O. Its pathway is amino-acid biosynthesis; L-methionine biosynthesis via salvage pathway; L-methionine from S-methyl-5-thio-alpha-D-ribose 1-phosphate: step 2/6. Catalyzes the dehydration of methylthioribulose-1-phosphate (MTRu-1-P) into 2,3-diketo-5-methylthiopentyl-1-phosphate (DK-MTP-1-P). In Leptospira borgpetersenii serovar Hardjo-bovis (strain JB197), this protein is Methylthioribulose-1-phosphate dehydratase.